Here is a 305-residue protein sequence, read N- to C-terminus: Ribonuclease Z (305 aa).

Residues His-61, His-63, Asp-65, His-66, His-141, Asp-209, and His-268 each contribute to the Zn(2+) site. The Proton acceptor role is filled by Asp-65.

This sequence belongs to the RNase Z family. As to quaternary structure, homodimer. The cofactor is Zn(2+).

The catalysed reaction is Endonucleolytic cleavage of RNA, removing extra 3' nucleotides from tRNA precursor, generating 3' termini of tRNAs. A 3'-hydroxy group is left at the tRNA terminus and a 5'-phosphoryl group is left at the trailer molecule.. Zinc phosphodiesterase, which displays some tRNA 3'-processing endonuclease activity. Probably involved in tRNA maturation, by removing a 3'-trailer from precursor tRNA. The chain is Ribonuclease Z from Clostridioides difficile (strain 630) (Peptoclostridium difficile).